Consider the following 199-residue polypeptide: Small heat shock protein hspG4 (199 aa).

Residues 30–199 (NKRVDIIPSM…SSNTIKININ (170 aa)) form the sHSP domain. The tract at residues 83–105 (KNQQQQQQQQQLENSNNKENDEP) is disordered.

It belongs to the small heat shock protein (HSP20) family.

This chain is Small heat shock protein hspG4 (hspG4), found in Dictyostelium discoideum (Social amoeba).